Reading from the N-terminus, the 795-residue chain is Toll-like receptor 6 (795 aa).

The N-terminal stretch at Met1–Pro27 is a signal peptide. The Extracellular segment spans residues Phe28 to Thr584. Asn42 is a glycosylation site (N-linked (GlcNAc...) asparagine). 19 LRR repeats span residues Thr54 to Glu77, Leu78 to Asp101, Leu102 to His125, Leu126 to Phe150, Leu151 to Leu175, Leu176 to Leu199, His200 to Leu223, Gln224 to Thr250, Leu251 to Val278, Glu279 to Met308, Ile309 to Ser337, Ile338 to Thr361, Gln362 to Gly388, Leu389 to Ser414, Leu415 to Ser437, Asn438 to Leu457, His458 to Leu478, Asn479 to Leu500, and Val501 to Leu524. Residue Asn114 is glycosylated (N-linked (GlcNAc...) asparagine). A disulfide bond links Cys117 and Cys139. Residue Asn144 is glycosylated (N-linked (GlcNAc...) asparagine). Asn195 and Asn214 each carry an N-linked (GlcNAc...) asparagine glycan. Cys235 and Cys265 form a disulfide bridge. Asn253 and Asn285 each carry an N-linked (GlcNAc...) asparagine glycan. Cys348 and Cys373 form a disulfide bridge. Asn359 carries N-linked (GlcNAc...) asparagine glycosylation. N-linked (GlcNAc...) asparagine glycosylation is found at Asn401 and Asn434. Cys424 and Cys447 are oxidised to a cystine. Positions Thr525–His576 constitute an LRRCT domain. Residues Val585–Leu605 form a helical membrane-spanning segment. Residues Cys606 to Thr795 are Cytoplasmic-facing. A TIR domain is found at Leu640–Phe781.

Belongs to the Toll-like receptor family. As to quaternary structure, homodimer (via cytoplasmic TIR domain). Heterodimer with TLR2 via their respective extracellular domains. Binds MYD88 via their respective TIR domains. Interacts with CD36, following CD36 stimulation by oxLDL or amyloid-beta 42, and forms a heterodimer with TLR4. The trimeric complex is internalized and triggers inflammatory response. LYN kinase activity facilitates TLR4:TLR6 heterodimerization and signal initiation. The heterodimer TLR2:TLR6 interacts with CD14 and CD36 in response to triacylated lipopeptides. Detected in thymus, spleen, ovary and lung. Expressed in macrohpages.

The protein localises to the cell membrane. The protein resides in the cytoplasmic vesicle. It localises to the phagosome membrane. Its subcellular location is the membrane raft. It is found in the golgi apparatus. Its function is as follows. Participates in the innate immune response to Gram-positive bacteria and fungi. Specifically recognizes diacylated and, to a lesser extent, triacylated lipopeptides. In response to diacylated lipopeptides, forms the activation cluster TLR2:TLR6:CD14:CD36, this cluster triggers signaling from the cell surface and subsequently is targeted to the Golgi in a lipid-raft dependent pathway. Acts via MYD88 and TRAF6, leading to NF-kappa-B activation, cytokine secretion and the inflammatory response. Recognizes mycoplasmal macrophage-activating lipopeptide-2kD (MALP-2), soluble tuberculosis factor (STF), phenol-soluble modulin (PSM) and B.burgdorferi outer surface protein A lipoprotein (OspA-L) cooperatively with TLR2. In complex with TLR4, promotes sterile inflammation in monocytes/macrophages in response to oxidized low-density lipoprotein (oxLDL) or amyloid-beta 42. In this context, the initial signal is provided by oxLDL- or amyloid-beta 42-binding to CD36. This event induces the formation of a heterodimer of TLR4 and TLR6, which is rapidly internalized and triggers inflammatory response, leading to the NF-kappa-B-dependent production of CXCL1, CXCL2 and CCL9 cytokines, via MYD88 signaling pathway, and CCL5 cytokine, via TICAM1 signaling pathway, as well as IL1B secretion. In Mus musculus (Mouse), this protein is Toll-like receptor 6 (Tlr6).